We begin with the raw amino-acid sequence, 284 residues long: Phosphatidylglycerol--prolipoprotein diacylglyceryl transferase (284 aa).

7 helical membrane-spanning segments follow: residues 14–34 (IAFSLGSIEVHWYGLAYACAI), 62–82 (YFLWAELGIVLGARVGYILIY), 106–126 (FVGIRGMSYHGGLVGFLIASY), 136–156 (LLIYLDLIAISLPLGYVFGRI), 190–210 (PSQLIEAFLEGVIVFLMVLWA), 218–238 (GLLIVVYGLGYSLMRFIAEFY), and 252–272 (LSMGQILSLLMVIVSLGILLY). R155 contacts a 1,2-diacyl-sn-glycero-3-phospho-(1'-sn-glycerol).

Belongs to the Lgt family.

The protein localises to the cell inner membrane. It carries out the reaction L-cysteinyl-[prolipoprotein] + a 1,2-diacyl-sn-glycero-3-phospho-(1'-sn-glycerol) = an S-1,2-diacyl-sn-glyceryl-L-cysteinyl-[prolipoprotein] + sn-glycerol 1-phosphate + H(+). It participates in protein modification; lipoprotein biosynthesis (diacylglyceryl transfer). Its function is as follows. Catalyzes the transfer of the diacylglyceryl group from phosphatidylglycerol to the sulfhydryl group of the N-terminal cysteine of a prolipoprotein, the first step in the formation of mature lipoproteins. The polypeptide is Phosphatidylglycerol--prolipoprotein diacylglyceryl transferase (Helicobacter pylori (strain Shi470)).